The following is a 479-amino-acid chain: U6 small nuclear RNA (adenine-(43)-N(6))-methyltransferase (479 aa).

Residues Lys82, Gly108, Asp131, Thr164, and Asn184 each contribute to the S-adenosyl-L-methionine site. The involved in dlc-1 binding stretch occupies residues 420 to 424 (DNASQ).

This sequence belongs to the methyltransferase superfamily. METTL16/RlmF family. As to quaternary structure, self-associates. Interacts with dlc-1; the interaction is direct, and is required for nuclear localization of mett-10. As to expression, expressed in the intestine, vulva, and cells of the somatic gonad including distal tip cells, gonadal sheath cells and spermatheca.

It is found in the nucleus. The enzyme catalyses an adenosine in mRNA + S-adenosyl-L-methionine = an N(6)-methyladenosine in mRNA + S-adenosyl-L-homocysteine + H(+). It catalyses the reaction adenosine in U6 snRNA + S-adenosyl-L-methionine = N(6)-methyladenosine in U6 snRNA + S-adenosyl-L-homocysteine + H(+). Functionally, RNA N6-methyltransferase that methylates adenosine residues at the N(6) position of a subset of RNAs and is involved in S-adenosyl-L-methionine homeostasis by regulating splicing of S-adenosylmethionine synthase transcripts (sams-3, sams-4 and sams-5). Able to N6-methylate a subset of mRNAs containing the 5'UACAGAAAC-3' nonamer sequence. Plays a key role in S-adenosyl-L-methionine homeostasis: under rich-diet conditions, catalyzes N6-methylation of S-adenosylmethionine synthase mRNAs (sams-3, sams-4 and sams-5), directly inhibiting splicing and protein production of S-adenosylmethionine synthase. In addition to mRNAs, also able to mediate N6-methylation of U6 small nuclear RNA (U6 snRNA). Required for gamete production, inhibiting germ cell proliferative fate and ensuring germ cell meiotic development. Also promotes progression of the mitotic cell cycle in those germ cells that continue to proliferate. Plays a role in the development of the vulva, somatic gonad and embryo. The protein is U6 small nuclear RNA (adenine-(43)-N(6))-methyltransferase of Caenorhabditis elegans.